The primary structure comprises 184 residues: Large ribosomal subunit protein uL6 (184 aa).

This sequence belongs to the universal ribosomal protein uL6 family. Part of the 50S ribosomal subunit.

Functionally, this protein binds to the 23S rRNA, and is important in its secondary structure. It is located near the subunit interface in the base of the L7/L12 stalk, and near the tRNA binding site of the peptidyltransferase center. In Cytophaga hutchinsonii (strain ATCC 33406 / DSM 1761 / CIP 103989 / NBRC 15051 / NCIMB 9469 / D465), this protein is Large ribosomal subunit protein uL6.